The following is a 230-amino-acid chain: Chalcone--flavanone isomerase (230 aa).

Substrate-binding residues include threonine 52, asparagine 117, and serine 194.

This sequence belongs to the chalcone isomerase family.

The enzyme catalyses a chalcone = a flavanone.. It participates in secondary metabolite biosynthesis; flavonoid biosynthesis. Functionally, catalyzes the intramolecular cyclization of bicyclic chalcones into tricyclic (S)-flavanones. Responsible for the isomerization of 4,2',4',6'-tetrahydroxychalcone (also termed chalcone) into naringenin. In Camellia sinensis (Tea plant), this protein is Chalcone--flavanone isomerase (CHI).